The following is a 370-amino-acid chain: 3-isopropylmalate dehydrogenase (370 aa).

77 to 90 (GAKWDGVPYEARPE) contacts NAD(+). Substrate contacts are provided by Arg-97, Arg-107, Arg-135, and Asp-226. 3 residues coordinate Mg(2+): Asp-226, Asp-250, and Asp-254. 290–302 (GSAPDIAGKGLAN) contacts NAD(+).

The protein belongs to the isocitrate and isopropylmalate dehydrogenases family. LeuB type 1 subfamily. As to quaternary structure, homodimer. Mg(2+) is required as a cofactor. The cofactor is Mn(2+).

The protein localises to the cytoplasm. It catalyses the reaction (2R,3S)-3-isopropylmalate + NAD(+) = 4-methyl-2-oxopentanoate + CO2 + NADH. The protein operates within amino-acid biosynthesis; L-leucine biosynthesis; L-leucine from 3-methyl-2-oxobutanoate: step 3/4. In terms of biological role, catalyzes the oxidation of 3-carboxy-2-hydroxy-4-methylpentanoate (3-isopropylmalate) to 3-carboxy-4-methyl-2-oxopentanoate. The product decarboxylates to 4-methyl-2 oxopentanoate. The sequence is that of 3-isopropylmalate dehydrogenase from Rhodopseudomonas palustris (strain BisB18).